We begin with the raw amino-acid sequence, 30 residues long: Alpha-conotoxin EIVA (30 aa).

Intrachain disulfides connect C2/C16, C3/C11, and C14/C24. P7, P13, P21, P22, and P27 each carry 4-hydroxyproline. G30 bears the Glycine amide mark.

In terms of tissue distribution, expressed by the venom duct.

Its subcellular location is the secreted. Functionally, alpha-conotoxins act on postsynaptic membranes, they bind to the nicotinic acetylcholine receptors (nAChR) and thus inhibit them. This toxin binds with high affinity to both fetal (alpha-1-beta-1-epsilon-delta (CHRNA1-CHRNB1-CHRND-CHRNE) subunits) and adult (alpha-1/beta-1/gamma/delta subunits) mammalian muscle nicotinic acetylcholine receptors (nAChR). This Conus ermineus (Agate cone) protein is Alpha-conotoxin EIVA.